A 286-amino-acid polypeptide reads, in one-letter code: Cytochrome c oxidase subunit 3 (286 aa).

The next 8 membrane-spanning stretches (helical) occupy residues 13–33 (GVFL…GVVI), 40–60 (VGTF…CFLI), 85–105 (IIQY…VVFF), 133–153 (IILD…NIIL), 173–195 (LCRE…LLFI), 199–221 (VWEF…LFSI), 223–243 (TLHF…IFNI), and 253–273 (IVLI…WFFL).

Belongs to the cytochrome c oxidase subunit 3 family. In terms of assembly, component of the cytochrome c oxidase (complex IV, CIV), a multisubunit enzyme composed of a catalytic core of 3 subunits and several supernumerary subunits. The complex exists as a monomer or a dimer and forms supercomplexes (SCs) in the inner mitochondrial membrane with ubiquinol-cytochrome c oxidoreductase (cytochrome b-c1 complex, complex III, CIII).

The protein resides in the mitochondrion inner membrane. The catalysed reaction is 4 Fe(II)-[cytochrome c] + O2 + 8 H(+)(in) = 4 Fe(III)-[cytochrome c] + 2 H2O + 4 H(+)(out). Component of the cytochrome c oxidase, the last enzyme in the mitochondrial electron transport chain which drives oxidative phosphorylation. The respiratory chain contains 3 multisubunit complexes succinate dehydrogenase (complex II, CII), ubiquinol-cytochrome c oxidoreductase (cytochrome b-c1 complex, complex III, CIII) and cytochrome c oxidase (complex IV, CIV), that cooperate to transfer electrons derived from NADH and succinate to molecular oxygen, creating an electrochemical gradient over the inner membrane that drives transmembrane transport and the ATP synthase. Cytochrome c oxidase is the component of the respiratory chain that catalyzes the reduction of oxygen to water. Electrons originating from reduced cytochrome c in the intermembrane space (IMS) are transferred via the dinuclear copper A center (CU(A)) of subunit 2 and heme A of subunit 1 to the active site in subunit 1, a binuclear center (BNC) formed by heme A3 and copper B (CU(B)). The BNC reduces molecular oxygen to 2 water molecules using 4 electrons from cytochrome c in the IMS and 4 protons from the mitochondrial matrix. The chain is Cytochrome c oxidase subunit 3 (COIII) from Trypanoplasma borreli.